Consider the following 103-residue polypeptide: Small ribosomal subunit protein uS10 (103 aa).

This sequence belongs to the universal ribosomal protein uS10 family. In terms of assembly, part of the 30S ribosomal subunit.

In terms of biological role, involved in the binding of tRNA to the ribosomes. This Mycoplasmopsis pulmonis (strain UAB CTIP) (Mycoplasma pulmonis) protein is Small ribosomal subunit protein uS10.